Consider the following 282-residue polypeptide: MLLSKKSEYKTLSTVEHPQYIVFCDFDETYFPHTIDEQKQQDIYELEDYLEQKSKDGELIIGWVTGSSIESILDKMGRGKFRYFPHFIASDLGTEITYFSEHNFGQQDNKWNSRINEGFSKEKVEKLVKQLHENHNILLNPQTQLGKSRYKHNFYYQEQDEINDKKNLLAIEKICEEYGVSVNINRCNPLAGDPEDSYDVDFIPIGTGKNEIVTFMLEKYNLNTERAIAFGDSGNDVRMLQTVGNGYLLKNATQEAKNLHNLITDSEYSKGITNTLKKLIGS.

The active-site Nucleophile is D25. Positions 25 and 27 each coordinate Mg(2+). Position 209 (K209) interacts with phosphate. Mg(2+)-binding residues include D232 and S233. Residue N235 coordinates phosphate.

This sequence belongs to the HAD-like hydrolase superfamily. Cof family. Homotetramer. Mg(2+) is required as a cofactor.

The enzyme catalyses D-kanosamine 6-phosphate + H2O = kanosamine + phosphate. It participates in antibiotic biosynthesis; kanosamine biosynthesis. Involved in the biosynthesis of kanosamine (3-amino-3-deoxy-D-glucose), which is known to have antibiotic and antifungal properties, and to be a precursor of the antibiotic neotrehalosadiamine (3,3'-diamino-3,3'-dideoxy-alpha,beta-trehalose (NTD)). Catalyzes the dephosphorylation of kanosamine 6-phosphate to yield kanosamine. There is a trace amount of activity using glucosamine-6-phosphate. This is Kanosamine-6-phosphate phosphatase (ntdB) from Bacillus subtilis (strain 168).